A 930-amino-acid polypeptide reads, in one-letter code: Progesterone receptor (930 aa).

A compositionally biased stretch (basic and acidic residues) spans 1–11; it reads MTELKAKEPRA. 2 disordered regions span residues 1 to 133 and 148 to 260; these read MTEL…ASPA and LPED…SGAA. The tract at residues 1-165 is AF3; mediates transcriptional activation; sequence MTELKAKEPR…PATKGVLAPL (165 aa). The segment at 1 to 565 is modulating, Pro-Rich; that stretch reads MTELKAKEPR…PQYSFESLPQ (565 aa). Lys7 participates in a covalent cross-link: Glycyl lysine isopeptide (Lys-Gly) (interchain with G-Cter in SUMO). At Ser20 the chain carries Phosphoserine. A compositionally biased stretch (polar residues) spans 38-49; the sequence is QGSQTSEASSVV. Residues 56–60 carry the LXXL motif 1 motif; that stretch reads LDGLL. Ser82 carries the phosphoserine modification. The LXXL motif 2 motif lies at 116–120; sequence LDTLL. A Phosphoserine modification is found at Ser131. Residues 166-304 are mediates transcriptional transrepression; it reads MSRPEDKAGD…LATSVVDFIH (139 aa). The short motif at 184–188 is the Nuclear localization signal element; sequence KVLPR. Residues 187 to 204 show a composition bias toward low complexity; the sequence is PRGLSPSRQLLLPSSGSP. Phosphoserine is present on residues Ser191 and Ser212. Ser293 carries the post-translational modification Phosphoserine; by MAPK1. Residues 334-356 form a disordered region; that stretch reads AASPFVPQRGSPSASSTPVAGGD. The residue at position 344 (Ser344) is a Phosphoserine; by MAPK. Lys387 participates in a covalent cross-link: Glycyl lysine isopeptide (Lys-Gly) (interchain with G-Cter in SUMO); alternate. Lys387 participates in a covalent cross-link: Glycyl lysine isopeptide (Lys-Gly) (interchain with G-Cter in ubiquitin); alternate. Ser399 carries the phosphoserine; by CDK2 modification. Residues 415–454 form a disordered region; sequence DFQLAAPPPPSLPPRVPSSRPGEAAVAASPGSASVSSSSS. Residues 420 to 430 are compositionally biased toward pro residues; it reads APPPPSLPPRV. Over residues 431–454 the composition is skewed to low complexity; it reads PSSRPGEAAVAASPGSASVSSSSS. Residues 457 to 547 are AF1; mediates transcriptional activation; that stretch reads STLECILYKA…VYTPYLNYLR (91 aa). Lys532 is covalently cross-linked (Glycyl lysine isopeptide (Lys-Gly) (interchain with G-Cter in SUMO)). The nuclear receptor DNA-binding region spans 566–640; that stretch reads KICLICGDEA…AGMVLGGRKF (75 aa). 2 NR C4-type zinc fingers span residues 568–588 and 604–628; these read CLIC…CGSC and CAGR…LRKC. Residue Ser673 is modified to Phosphoserine. The NR LBD domain maps to 676-910; that stretch reads QEIQLIPPLI…EFPEMMSEVI (235 aa). Positions 684 to 930 are AF2; mediates transcriptional activation; the sequence is LINLLMSIEP…MVKPLLFHKK (247 aa). Arg763 is a progesterone binding site.

It belongs to the nuclear hormone receptor family. NR3 subfamily. In terms of assembly, interacts with SMARD1 and UNC45A. Interacts with CUEDC2; the interaction promotes ubiquitination, decreases sumoylation, and represses transcriptional activity. Interacts with PIAS3; the interaction promotes sumoylation of PR in a hormone-dependent manner, inhibits DNA-binding, and alters nuclear export. Interacts with SP1; the interaction requires ligand-induced phosphorylation on Ser-344 by ERK1/2-MAPK. Interacts with PRMT2. Interacts with NCOA2 and NCOA1. Interacts with KLF9. Interacts with GTF2B. Phosphorylated on multiple serine sites. Several of these sites are hormone-dependent. Phosphorylation on Ser-293 is highly hormone-dependent and modulates ubiquitination and sumoylation on Lys-387. Phosphorylation on Ser-102 and Ser-344 also requires induction by hormone. Basal phosphorylation on Ser-82, Ser-191 and Ser-399 is increased in response to progesterone and can be phosphorylated in vitro by the CDK2-A1 complex. Increased levels of phosphorylation on Ser-399 also in the presence of EGF, heregulin, IGF, PMA and FBS. Phosphorylation at this site by CDK2 is ligand-independent, and increases nuclear translocation and transcriptional activity. Phosphorylation at Ser-293, but not at Ser-191, is impaired during the G(2)/M phase of the cell cycle. Phosphorylation on Ser-344 by ERK1/2 MAPK is required for interaction with SP1. In terms of processing, sumoylation is hormone-dependent and represses transcriptional activity. Sumoylation on all three sites is enhanced by PIAS3. Desumoylated by SENP1. Sumoylation on Lys-387, the main site of sumoylation, is repressed by ubiquitination on the same site, and modulated by phosphorylation at Ser-293. Post-translationally, ubiquitination is hormone-dependent and represses sumoylation on the same site. Promoted by MAPK-mediated phosphorylation on Ser-293. Ubiquitinated by UBR5, leading to its degradation: UBR5 specifically recognizes and binds ligand-bound PGR when it is not associated with coactivators (NCOAs). In presence of NCOAs, the UBR5-degron is not accessible, preventing its ubiquitination and degradation. Palmitoylated by ZDHHC7 and ZDHHC21. Palmitoylation is required for plasma membrane targeting and for rapid intracellular signaling via ERK and AKT kinases and cAMP generation.

Its subcellular location is the nucleus. It is found in the cytoplasm. Its function is as follows. The steroid hormones and their receptors are involved in the regulation of eukaryotic gene expression and affect cellular proliferation and differentiation in target tissues. Transcriptional activator of several progesteron-dependent promoters in a variety of cell types. Involved in activation of SRC-dependent MAPK signaling on hormone stimulation. In Oryctolagus cuniculus (Rabbit), this protein is Progesterone receptor (PGR).